The sequence spans 227 residues: UPF0758 protein CPE2144 (227 aa).

One can recognise an MPN domain in the interval 105–227 (KISKPSDVAK…FISLKEKDIL (123 aa)). 3 residues coordinate Zn(2+): His-176, His-178, and Asp-189. Positions 176-189 (HNHPSGDPTPSRDD) match the JAMM motif motif.

This sequence belongs to the UPF0758 family.

The protein is UPF0758 protein CPE2144 of Clostridium perfringens (strain 13 / Type A).